The following is a 199-amino-acid chain: ATP-dependent Clp protease proteolytic subunit (199 aa).

Serine 98 functions as the Nucleophile in the catalytic mechanism. Histidine 123 is a catalytic residue.

It belongs to the peptidase S14 family. Fourteen ClpP subunits assemble into 2 heptameric rings which stack back to back to give a disk-like structure with a central cavity, resembling the structure of eukaryotic proteasomes.

It is found in the cytoplasm. The enzyme catalyses Hydrolysis of proteins to small peptides in the presence of ATP and magnesium. alpha-casein is the usual test substrate. In the absence of ATP, only oligopeptides shorter than five residues are hydrolyzed (such as succinyl-Leu-Tyr-|-NHMec, and Leu-Tyr-Leu-|-Tyr-Trp, in which cleavage of the -Tyr-|-Leu- and -Tyr-|-Trp bonds also occurs).. Its function is as follows. Cleaves peptides in various proteins in a process that requires ATP hydrolysis. Has a chymotrypsin-like activity. Plays a major role in the degradation of misfolded proteins. The protein is ATP-dependent Clp protease proteolytic subunit of Clostridium botulinum (strain Alaska E43 / Type E3).